Reading from the N-terminus, the 74-residue chain is Anionic peptide clone 9 (74 aa).

The signal sequence occupies residues 1–24 (MVSKSLIVLLLVSVLVSTFFTTEA).

This sequence belongs to the non-disulfide-bridged peptide (NDBP) superfamily. Long chain multifunctional peptide (group 2) family. Expressed by the venom gland.

The protein resides in the secreted. In terms of biological role, may be an antimicrobial peptide. The polypeptide is Anionic peptide clone 9 (Tityus costatus (Brazilian scorpion)).